The following is a 42-amino-acid chain: Mating-type M-specific polypeptide Mi (42 aa).

It is found in the cytoplasm. The protein resides in the nucleus. In terms of biological role, mating type proteins are sequence specific DNA-binding proteins that act as master switches in yeast differentiation by controlling gene expression in a cell type-specific fashion. Required for meiosis, but plays no role in conjugation. This Schizosaccharomyces pombe (strain 972 / ATCC 24843) (Fission yeast) protein is Mating-type M-specific polypeptide Mi (mat1-Mi).